The primary structure comprises 156 residues: Transcription elongation factor GreA (156 aa).

The stretch at 44 to 67 (ENAEYEAAKEKQAMIEGRIQDLCQ) forms a coiled coil.

The protein belongs to the GreA/GreB family.

Necessary for efficient RNA polymerase transcription elongation past template-encoded arresting sites. The arresting sites in DNA have the property of trapping a certain fraction of elongating RNA polymerases that pass through, resulting in locked ternary complexes. Cleavage of the nascent transcript by cleavage factors such as GreA or GreB allows the resumption of elongation from the new 3'terminus. GreA releases sequences of 2 to 3 nucleotides. The protein is Transcription elongation factor GreA of Syntrophobacter fumaroxidans (strain DSM 10017 / MPOB).